A 244-amino-acid chain; its full sequence is 7-cyano-7-deazaguanine synthase (244 aa).

An ATP-binding site is contributed by 14–24; it reads FSGGQDSATCV. Zn(2+) contacts are provided by Cys-202, Cys-217, Cys-220, and Cys-223.

It belongs to the QueC family. Requires Zn(2+) as cofactor.

The enzyme catalyses 7-carboxy-7-deazaguanine + NH4(+) + ATP = 7-cyano-7-deazaguanine + ADP + phosphate + H2O + H(+). It functions in the pathway purine metabolism; 7-cyano-7-deazaguanine biosynthesis. In terms of biological role, catalyzes the ATP-dependent conversion of 7-carboxy-7-deazaguanine (CDG) to 7-cyano-7-deazaguanine (preQ(0)). The chain is 7-cyano-7-deazaguanine synthase from Burkholderia cenocepacia (strain ATCC BAA-245 / DSM 16553 / LMG 16656 / NCTC 13227 / J2315 / CF5610) (Burkholderia cepacia (strain J2315)).